A 469-amino-acid polypeptide reads, in one-letter code: Putative dipeptidase SH1171 (469 aa).

H84 is a binding site for Zn(2+). D86 is an active-site residue. Residue D115 coordinates Zn(2+). E149 serves as the catalytic Proton acceptor. Residues E150, D173, and H440 each coordinate Zn(2+).

The protein belongs to the peptidase M20A family. Zn(2+) is required as a cofactor.

This chain is Putative dipeptidase SH1171, found in Staphylococcus haemolyticus (strain JCSC1435).